We begin with the raw amino-acid sequence, 426 residues long: Enolase (426 aa).

Q163 is a binding site for (2R)-2-phosphoglycerate. E205 serves as the catalytic Proton donor. The Mg(2+) site is built by D242, E283, and D310. (2R)-2-phosphoglycerate-binding residues include K335, R364, S365, and K386. K335 (proton acceptor) is an active-site residue.

It belongs to the enolase family. Mg(2+) is required as a cofactor.

The protein resides in the cytoplasm. It is found in the secreted. The protein localises to the cell surface. The catalysed reaction is (2R)-2-phosphoglycerate = phosphoenolpyruvate + H2O. It functions in the pathway carbohydrate degradation; glycolysis; pyruvate from D-glyceraldehyde 3-phosphate: step 4/5. Catalyzes the reversible conversion of 2-phosphoglycerate (2-PG) into phosphoenolpyruvate (PEP). It is essential for the degradation of carbohydrates via glycolysis. The chain is Enolase from Clavibacter michiganensis subsp. michiganensis (strain NCPPB 382).